Here is a 222-residue protein sequence, read N- to C-terminus: Thiol:disulfide interchange protein DsbL (222 aa).

Residues 1 to 27 (MSAKWINSIFKSVVLTAALALPFTASA) form the signal peptide. Residues 28 to 221 (FTEGTDYMVL…MAQLVRELAT (194 aa)) enclose the Thioredoxin domain. Residues Cys-56 and Cys-59 are joined by a disulfide bond.

This sequence belongs to the thioredoxin family. DsbL subfamily. As to quaternary structure, interacts with DsbI.

Its subcellular location is the periplasm. Its function is as follows. Involved in disulfide-bond formation. Acts by transferring its disulfide bond to other proteins. Part of a redox system composed of DsbI and DsbL that mediates formation of an essential disulfide bond in AssT. The protein is Thiol:disulfide interchange protein DsbL of Lelliottia amnigena (Enterobacter amnigenus).